Consider the following 906-residue polypeptide: Alanine--tRNA ligase, chloroplastic/mitochondrial (906 aa).

Basic and acidic residues predominate over residues 1-10; sequence MSAATERERL. Positions 1 to 22 are disordered; sequence MSAATERERLTNANPNARGKDN. The Zn(2+) site is built by His-589, His-593, Cys-691, and His-695.

The protein belongs to the class-II aminoacyl-tRNA synthetase family. In terms of assembly, monomer. The cofactor is Zn(2+).

The protein resides in the plastid. It is found in the chloroplast. It localises to the mitochondrion. It carries out the reaction tRNA(Ala) + L-alanine + ATP = L-alanyl-tRNA(Ala) + AMP + diphosphate. Catalyzes the attachment of alanine to tRNA(Ala) in a two-step reaction: alanine is first activated by ATP to form Ala-AMP and then transferred to the acceptor end of tRNA(Ala). Also edits incorrectly charged tRNA(Ala) via its editing domain. This is Alanine--tRNA ligase, chloroplastic/mitochondrial from Ostreococcus lucimarinus (strain CCE9901).